The following is a 352-amino-acid chain: uncharacterized protein (352 aa).

The segment at 1–40 (MTSTMKLFTDHAEISVRERPPQRNNNNQEQDNSNRPAPRR) is disordered. Basic and acidic residues predominate over residues 8–21 (FTDHAEISVRERPP). Residues 22–36 (QRNNNNQEQDNSNRP) show a composition bias toward low complexity. A helical membrane pass occupies residues 317–333 (MTITLPCGLTIAFFVYY).

The protein localises to the host cell membrane. This is an uncharacterized protein from Diadromus pulchellus idnoreovirus 1 (DpIRV-1).